Consider the following 175-residue polypeptide: NADH dehydrogenase [ubiquinone] iron-sulfur protein 4, mitochondrial (175 aa).

The N-terminal 42 residues, 1-42 (MAAVSMSVVLRQTLWRRRAVAVAALSVSRVPTRSLRTSTWRL), are a transit peptide targeting the mitochondrion. The segment at 151-175 (KVPKPKSKSYGANFSWNKRTRVSTK) is disordered. Serine 173 is modified (phosphoserine; by PKA).

This sequence belongs to the complex I NDUFS4 subunit family. In terms of assembly, mammalian complex I is composed of 45 different subunits. This is a component of the iron-sulfur (IP) fragment of the enzyme. Interacts with BCAP31 and TOMM40; the interaction mediates its translocation to the mitochondria; the interaction with BCAP31 is direct.

Its subcellular location is the mitochondrion inner membrane. Accessory subunit of the mitochondrial membrane respiratory chain NADH dehydrogenase (Complex I), that is believed not to be involved in catalysis. Complex I functions in the transfer of electrons from NADH to the respiratory chain. The immediate electron acceptor for the enzyme is believed to be ubiquinone. The protein is NADH dehydrogenase [ubiquinone] iron-sulfur protein 4, mitochondrial (NDUFS4) of Homo sapiens (Human).